We begin with the raw amino-acid sequence, 345 residues long: KRR1 small subunit processome component homolog (345 aa).

The KH domain maps to 125–193; the sequence is DIIKIGNLVH…VRDIVLETMN (69 aa). Positions 232–245 are enriched in basic residues; it reads NISKRKQPKVKKQK. Disordered stretches follow at residues 232–260 and 273–329; these read NISK…ESKV and QEQK…VDVK. A coiled-coil region spans residues 270–298; the sequence is FLNQEQKQAKRNQERTEKQKEAAKRQDER. Composition is skewed to basic and acidic residues over residues 276–302 and 315–329; these read KQAK…RNKD and LKKE…VDVK.

This sequence belongs to the KRR1 family. In terms of assembly, monomer. Component of the ribosomal small subunit (SSU) processome.

The protein resides in the nucleus. Its subcellular location is the nucleolus. Its function is as follows. Required for 40S ribosome biogenesis. Involved in nucleolar processing of pre-18S ribosomal RNA and ribosome assembly. Binds to RNA. Required for female germline development, cell viability during eye development and for survival of dividing cells and epithelial cells during early wing disk development. The polypeptide is KRR1 small subunit processome component homolog (Drosophila erecta (Fruit fly)).